The primary structure comprises 130 residues: Glycine cleavage system H protein (130 aa).

In terms of domain architecture, Lipoyl-binding spans 25-107; it reads IATIGITEFA…YGEGWFLKVR (83 aa). Lys-66 carries the N6-lipoyllysine modification.

This sequence belongs to the GcvH family. In terms of assembly, the glycine cleavage system is composed of four proteins: P, T, L and H. Requires (R)-lipoate as cofactor.

Its function is as follows. The glycine cleavage system catalyzes the degradation of glycine. The H protein shuttles the methylamine group of glycine from the P protein to the T protein. The sequence is that of Glycine cleavage system H protein from Nostoc sp. (strain PCC 7120 / SAG 25.82 / UTEX 2576).